The chain runs to 302 residues: Troponin T, cardiac muscle isoforms (302 aa).

Acidic residues predominate over residues 1–55 (MSDSEEVVEEYEQEQEEEYVEEEEEEWLEEDDGQEDQVDEEEEETEETTAEEQED). 3 disordered regions span residues 1–99 (MSDS…GERL), 138–230 (KDRI…RKPL), and 280–302 (SDHQ…GRWK). S2 carries the post-translational modification N-acetylserine. At S2 the chain carries Phosphoserine; by CK2. The segment covering 65-79 (EGDREQEPGEGESKP) has biased composition (basic and acidic residues). Residues 82–93 (KPFMPNLVPPKI) show a composition bias toward pro residues. Composition is skewed to basic and acidic residues over residues 138 to 186 (KDRI…EKEA) and 204 to 230 (KSEK…RKPL).

Belongs to the troponin T family.

Its function is as follows. Troponin T is the tropomyosin-binding subunit of troponin, the thin filament regulatory complex which confers calcium-sensitivity to striated muscle actomyosin ATPase activity. The protein is Troponin T, cardiac muscle isoforms (TNNT2) of Gallus gallus (Chicken).